We begin with the raw amino-acid sequence, 61 residues long: Metallothionein-2 (61 aa).

Methionine 1 carries the post-translational modification N-acetylmethionine. The beta stretch occupies residues 1–29; sequence MDPNCSCATDGSCSCAGSCKCKQCKCTSC. A divalent metal cation is bound by residues cysteine 5, cysteine 7, cysteine 13, cysteine 15, cysteine 19, cysteine 21, cysteine 24, cysteine 26, cysteine 29, cysteine 33, cysteine 34, cysteine 36, cysteine 37, cysteine 41, cysteine 44, cysteine 48, cysteine 50, and cysteine 57. The segment at 30–61 is alpha; the sequence is KKSCCSCCPVGCAKCSQGCICKEASDKCSCCA. A Phosphoserine modification is found at serine 58. A divalent metal cation contacts are provided by cysteine 59 and cysteine 60.

It belongs to the metallothionein superfamily. Type 1 family.

Functionally, metallothioneins have a high content of cysteine residues that bind various heavy metals; these proteins are transcriptionally regulated by both heavy metals and glucocorticoids. The chain is Metallothionein-2 (Mt2) from Rattus norvegicus (Rat).